The sequence spans 439 residues: 3-phosphoshikimate 1-carboxyvinyltransferase (439 aa).

Residues lysine 27, serine 28, and arginine 32 each contribute to the 3-phosphoshikimate site. Residue lysine 27 coordinates phosphoenolpyruvate. Phosphoenolpyruvate is bound by residues glycine 101 and arginine 130. 3-phosphoshikimate-binding residues include serine 175, glutamine 177, aspartate 326, and lysine 353. Residue glutamine 177 participates in phosphoenolpyruvate binding. Aspartate 326 (proton acceptor) is an active-site residue. Residues arginine 357 and arginine 399 each coordinate phosphoenolpyruvate.

Belongs to the EPSP synthase family. In terms of assembly, monomer.

The protein localises to the cytoplasm. It carries out the reaction 3-phosphoshikimate + phosphoenolpyruvate = 5-O-(1-carboxyvinyl)-3-phosphoshikimate + phosphate. It functions in the pathway metabolic intermediate biosynthesis; chorismate biosynthesis; chorismate from D-erythrose 4-phosphate and phosphoenolpyruvate: step 6/7. In terms of biological role, catalyzes the transfer of the enolpyruvyl moiety of phosphoenolpyruvate (PEP) to the 5-hydroxyl of shikimate-3-phosphate (S3P) to produce enolpyruvyl shikimate-3-phosphate and inorganic phosphate. This Synechococcus sp. (strain CC9311) protein is 3-phosphoshikimate 1-carboxyvinyltransferase.